A 151-amino-acid polypeptide reads, in one-letter code: Transcriptional repressor NrdR (151 aa).

A zinc finger lies at 3 to 34 (CPYCGSLDNKVIDSRLSRDDTETRRRRECLEC). The region spanning 49 to 139 (LMIVKKDGRR…VYREFKDVHD (91 aa)) is the ATP-cone domain.

It belongs to the NrdR family. Zn(2+) is required as a cofactor.

Its function is as follows. Negatively regulates transcription of bacterial ribonucleotide reductase nrd genes and operons by binding to NrdR-boxes. The protein is Transcriptional repressor NrdR of Desulfosudis oleivorans (strain DSM 6200 / JCM 39069 / Hxd3) (Desulfococcus oleovorans).